We begin with the raw amino-acid sequence, 420 residues long: Meiotically up-regulated gene 137 protein (420 aa).

The 223-residue stretch at 10 to 232 (NEKPLGDQRA…QNSLTPQKKI (223 aa)) folds into the BAR domain. In terms of domain architecture, SH3 spans 279 to 345 (KETVFVKAIY…PVNYCTRIYD (67 aa)). Positions 398–420 (SQNVEASSQPIKIRKPLPEIPNK) are disordered.

Its subcellular location is the cytoplasm. The protein resides in the nucleus. Functionally, has a role in meiosis and sporulation. This chain is Meiotically up-regulated gene 137 protein (mug137), found in Schizosaccharomyces pombe (strain 972 / ATCC 24843) (Fission yeast).